Here is a 384-residue protein sequence, read N- to C-terminus: Flap endonuclease 1 (384 aa).

Positions 1–108 are N-domain; sequence MGIHKLMDLL…GELARRQKAK (108 aa). Asp-34 is a Mg(2+) binding site. Arg-74 contributes to the DNA binding site. The Mg(2+) site is built by Asp-90, Glu-162, Glu-164, Asp-183, and Asp-185. Positions 126–254 are I-domain; sequence EALKQEQRNL…VNAFKLITEH (129 aa). A DNA-binding site is contributed by Glu-162. Positions 232 and 234 each coordinate DNA. Asp-234 lines the Mg(2+) pocket. Positions 340–384 are disordered; sequence AKEHKGSQTRLNDFFKVQPKDTSSTSKASKKPTNTKSANKKGGKK. The tract at residues 346-354 is interaction with PCNA; that stretch reads SQTRLNDFF. Residues 359–376 show a composition bias toward low complexity; that stretch reads KDTSSTSKASKKPTNTKS.

The protein belongs to the XPG/RAD2 endonuclease family. FEN1 subfamily. In terms of assembly, interacts with PCNA. Three molecules of FEN1 bind to one PCNA trimer with each molecule binding to one PCNA monomer. PCNA stimulates the nuclease activity without altering cleavage specificity. The cofactor is Mg(2+). In terms of processing, phosphorylated. Phosphorylation upon DNA damage induces relocalization to the nuclear plasma.

Its subcellular location is the nucleus. The protein localises to the nucleolus. It is found in the nucleoplasm. It localises to the mitochondrion. Functionally, structure-specific nuclease with 5'-flap endonuclease and 5'-3' exonuclease activities involved in DNA replication and repair. During DNA replication, cleaves the 5'-overhanging flap structure that is generated by displacement synthesis when DNA polymerase encounters the 5'-end of a downstream Okazaki fragment. It enters the flap from the 5'-end and then tracks to cleave the flap base, leaving a nick for ligation. Also involved in the long patch base excision repair (LP-BER) pathway, by cleaving within the apurinic/apyrimidinic (AP) site-terminated flap. Acts as a genome stabilization factor that prevents flaps from equilibrating into structures that lead to duplications and deletions. Also possesses 5'-3' exonuclease activity on nicked or gapped double-stranded DNA, and exhibits RNase H activity. Also involved in replication and repair of rDNA and in repairing mitochondrial DNA. In Tetrahymena thermophila (strain SB210), this protein is Flap endonuclease 1.